A 291-amino-acid chain; its full sequence is MSGPFPAEPTKGPLAMQPAPKVNLKRTSSLVGPTQSFFMRESKALGAVQIMNGLFHITLGGLLMIPTGVFAPICLSVWYPLWGGIMYIISGSLLAAAAEKTSRKSLVKAKVIMSSLSLFAAISGIILSIMDILNMTLSHFLKMRRLELIQTSKPYVDIYDCEPSNSSEKNSPSTQYCNSIQSVFLGILSAMLISAFFQKLVTAGIVENEWKRMCTRSKSNVVLLSAGEKNEQTIKMKEEIIELSGVSSQPKNEEEIEIIPVQEEEEEEAEINFPAPPQEQESLPVENEIAP.

Topologically, residues M1–A44 are cytoplasmic. Phosphoserine is present on S29. Residues L45–I65 traverse the membrane as a helical segment. Over P66–G68 the chain is Extracellular. A helical membrane pass occupies residues V69–I89. At S90 to V111 the chain is on the cytoplasmic side. Residues I112–I132 traverse the membrane as a helical segment. Residues L133 to S182 lie on the Extracellular side of the membrane. A helical membrane pass occupies residues V183 to A203. At G204–P291 the chain is on the cytoplasmic side. Residue C214 is the site of S-palmitoyl cysteine attachment. Position 219 is a phosphoserine (S219). T233 carries the phosphothreonine modification. Positions V261–E270 are enriched in acidic residues. Positions V261–P291 are disordered.

The protein belongs to the MS4A family. As to quaternary structure, forms homotetramers. Interacts with the heavy and light chains of cell surface IgM, the antigen-binding components of the BCR. In terms of processing, phosphorylated.

The protein resides in the cell membrane. Its function is as follows. B-lymphocyte-specific membrane protein that plays a role in the regulation of cellular calcium influx necessary for the development, differentiation, and activation of B-lymphocytes. Functions as a store-operated calcium (SOC) channel component promoting calcium influx after activation by the B-cell receptor/BCR. The protein is B-lymphocyte antigen CD20 (Ms4a1) of Mus musculus (Mouse).